The chain runs to 524 residues: Cytochrome P450 monooxygenase patH (524 aa).

At 1-4 (MEPM) the chain is on the cytoplasmic side. The helical transmembrane segment at 5-23 (LLLILVAAVVLLFVRWAFV) threads the bilayer. Over 24–524 (YGHRTSNMPK…KEVFSQFTEG (501 aa)) the chain is Lumenal. A glycan (N-linked (GlcNAc...) asparagine) is linked at Asn191. Heme is bound at residue Cys442. N-linked (GlcNAc...) asparagine glycosylation occurs at Asn499.

Belongs to the cytochrome P450 family. Requires heme as cofactor.

It localises to the endoplasmic reticulum membrane. The enzyme catalyses 3-methylphenol + reduced [NADPH--hemoprotein reductase] + O2 = 3-hydroxybenzyl alcohol + oxidized [NADPH--hemoprotein reductase] + H2O + H(+). Its pathway is mycotoxin biosynthesis; patulin biosynthesis. Functionally, cytochrome P450 monooxygenase; part of the gene cluster that mediates the biosynthesis of patulin, an acetate-derived tetraketide mycotoxin produced by several fungal species that shows antimicrobial properties against several bacteria. PatH catalyzes the conversion of m-cresol into m-hydroxybenzyl alcohol. The pathway begins with the synthesis of 6-methylsalicylic acid by the polyketide synthase (PKS) patK via condensation of acetate and malonate units. The 6-methylsalicylic acid decarboxylase patG then catalyzes the decarboxylation of 6-methylsalicylic acid to yield m-cresol (also known as 3-methylphenol). These first reactions occur in the cytosol. The intermediate m-cresol is then transported into the endoplasmic reticulum where the cytochrome P450 monooxygenase patH converts it to m-hydroxybenzyl alcohol, which is further converted to gentisyl alcohol by the cytochrome P450 monooxygenase patI. The oxidoreductases patJ and patO further convert gentisyl alcohol to isoepoxydon in the vacuole. PatN catalyzes then the transformation of isoepoxydon into phyllostine. The cluster protein patF is responsible for the conversion from phyllostine to neopatulin whereas the alcohol dehydrogenase patD converts neopatulin to E-ascladiol. The steps between isoepoxydon and E-ascladiol occur in the cytosol, and E-ascladiol is probably secreted to the extracellular space by one of the cluster-specific transporters patC or patM. Finally, the secreted patulin synthase patE catalyzes the conversion of E-ascladiol to patulin. The chain is Cytochrome P450 monooxygenase patH from Aspergillus clavatus (strain ATCC 1007 / CBS 513.65 / DSM 816 / NCTC 3887 / NRRL 1 / QM 1276 / 107).